The primary structure comprises 138 residues: Large ribosomal subunit protein bL19 (138 aa).

Belongs to the bacterial ribosomal protein bL19 family.

This protein is located at the 30S-50S ribosomal subunit interface and may play a role in the structure and function of the aminoacyl-tRNA binding site. This chain is Large ribosomal subunit protein bL19, found in Rickettsia rickettsii (strain Iowa).